The primary structure comprises 215 residues: MASETEKTHALLQSCSTESLLSSLGLGLFCTVADRLLQFPIIQQNAWLRALSDNSVHCVIGMWSWAIVIGIRKKTDFGEIILAGFLASVIDIDHFLLSGSLSLKAALSLPRRPFLHCSTVIPTVVLTLKFTMHFFKLKDSWCFLPWMLFISWTSHHIRDGIRHGLWMCPFGKTSPLPFWLYVIITSSLPHICSFVMYFTGTRQMMSSKHGIHIDV.

A run of 3 helical transmembrane segments spans residues 77 to 97 (FGEI…HFLL), 114 to 134 (FLHC…TMHF), and 178 to 198 (FWLY…VMYF).

It localises to the membrane. In Bos taurus (Bovine), this protein is Transmembrane protein 267 (TMEM267).